Consider the following 103-residue polypeptide: Large ribosomal subunit protein eL14 (103 aa).

Belongs to the eukaryotic ribosomal protein eL14 family.

This Pyrobaculum islandicum (strain DSM 4184 / JCM 9189 / GEO3) protein is Large ribosomal subunit protein eL14.